A 254-amino-acid chain; its full sequence is Large ribosomal subunit protein uL15m (254 aa).

Residues 1–78 (MFNILSRVCR…GSGQRRGRRI (78 aa)) constitute a mitochondrion transit peptide. Residues 44–104 (NYQSKKRVGR…KVGHSTGHLK (61 aa)) are disordered. Residues 64–79 (GRGHKGSGQRRGRRIK) are compositionally biased toward basic residues.

It belongs to the universal ribosomal protein uL15 family. As to quaternary structure, component of the mitochondrial large ribosomal subunit (mt-LSU). Mature yeast 74S mitochondrial ribosomes consist of a small (37S) and a large (54S) subunit. The 37S small subunit contains a 15S ribosomal RNA (15S mt-rRNA) and at least 32 different proteins. The 54S large subunit contains a 21S rRNA (21S mt-rRNA) and at least 45 different proteins.

The protein localises to the mitochondrion. Functionally, component of the mitochondrial ribosome (mitoribosome), a dedicated translation machinery responsible for the synthesis of mitochondrial genome-encoded proteins, including at least some of the essential transmembrane subunits of the mitochondrial respiratory chain. The mitoribosomes are attached to the mitochondrial inner membrane and translation products are cotranslationally integrated into the membrane. In Schizosaccharomyces pombe (strain 972 / ATCC 24843) (Fission yeast), this protein is Large ribosomal subunit protein uL15m (mrpl10).